Consider the following 417-residue polypeptide: Glutamate-1-semialdehyde 2,1-aminomutase (417 aa).

Residue Lys263 is modified to N6-(pyridoxal phosphate)lysine.

It belongs to the class-III pyridoxal-phosphate-dependent aminotransferase family. HemL subfamily. The cofactor is pyridoxal 5'-phosphate.

It localises to the cytoplasm. It catalyses the reaction (S)-4-amino-5-oxopentanoate = 5-aminolevulinate. It functions in the pathway porphyrin-containing compound metabolism; protoporphyrin-IX biosynthesis; 5-aminolevulinate from L-glutamyl-tRNA(Glu): step 2/2. The polypeptide is Glutamate-1-semialdehyde 2,1-aminomutase (Methanospirillum hungatei JF-1 (strain ATCC 27890 / DSM 864 / NBRC 100397 / JF-1)).